A 178-amino-acid polypeptide reads, in one-letter code: N-alpha-acetyltransferase 20 (178 aa).

Residues 2–157 (TTLRAFTCDD…DAYDMRKALS (156 aa)) enclose the N-acetyltransferase domain.

This sequence belongs to the acetyltransferase family. ARD1 subfamily. In terms of assembly, component of the N-terminal acetyltransferase B (NatB) complex which is composed of NAA20 and NAA25.

It is found in the cytoplasm. The protein resides in the nucleus. The enzyme catalyses N-terminal L-methionyl-L-asparaginyl-[protein] + acetyl-CoA = N-terminal N(alpha)-acetyl-L-methionyl-L-asparaginyl-[protein] + CoA + H(+). It carries out the reaction N-terminal L-methionyl-L-glutaminyl-[protein] + acetyl-CoA = N-terminal N(alpha)-acetyl-L-methionyl-L-glutaminyl-[protein] + CoA + H(+). It catalyses the reaction N-terminal L-methionyl-L-aspartyl-[protein] + acetyl-CoA = N-terminal N(alpha)-acetyl-L-methionyl-L-aspartyl-[protein] + CoA + H(+). The catalysed reaction is N-terminal L-methionyl-L-glutamyl-[protein] + acetyl-CoA = N-terminal N(alpha)-acetyl-L-methionyl-L-glutamyl-[protein] + CoA + H(+). Its function is as follows. Catalytic subunit of the NatB complex which catalyzes acetylation of the N-terminal methionine residues of peptides beginning with Met-Asp, Met-Glu, Met-Asn and Met-Gln. Proteins with cell cycle functions are overrepresented in the pool of NatB substrates. Required for maintaining the structure and function of actomyosin fibers and for proper cellular migration. This Homo sapiens (Human) protein is N-alpha-acetyltransferase 20 (NAA20).